Consider the following 525-residue polypeptide: Ent-kaurene oxidase (525 aa).

A helical membrane pass occupies residues 31–51 (VHWLIYVAFGAWLCSYVIHVL). C466 serves as a coordination point for heme.

The protein belongs to the cytochrome P450 family. Heme serves as cofactor.

Its subcellular location is the membrane. The enzyme catalyses ent-kaur-16-ene + 3 reduced [NADPH--hemoprotein reductase] + 3 O2 = ent-kaur-16-en-19-oate + 3 oxidized [NADPH--hemoprotein reductase] + 4 H2O + 4 H(+). Its pathway is plant hormone biosynthesis; gibberellin biosynthesis. Functionally, catalyzes three successive oxidations of the 4-methyl group of ent-kaurene giving kaurenoic acid, a key step in gibberellin (GA) biosynthesis. The chain is Ent-kaurene oxidase (CYP503A1) from Gibberella intermedia (Bulb rot disease fungus).